Reading from the N-terminus, the 380-residue chain is tRNA-specific 2-thiouridylase MnmA (380 aa).

ATP-binding positions include 6–13 (ALSGGVDS) and Met-32. The Nucleophile role is filled by Cys-101. The cysteines at positions 101 and 199 are disulfide-linked. Gly-125 is a binding site for ATP. Positions 148-150 (KDQ) are interaction with tRNA. Cys-199 functions as the Cysteine persulfide intermediate in the catalytic mechanism.

This sequence belongs to the MnmA/TRMU family.

The protein localises to the cytoplasm. The enzyme catalyses S-sulfanyl-L-cysteinyl-[protein] + uridine(34) in tRNA + AH2 + ATP = 2-thiouridine(34) in tRNA + L-cysteinyl-[protein] + A + AMP + diphosphate + H(+). Its function is as follows. Catalyzes the 2-thiolation of uridine at the wobble position (U34) of tRNA, leading to the formation of s(2)U34. This is tRNA-specific 2-thiouridylase MnmA from Beutenbergia cavernae (strain ATCC BAA-8 / DSM 12333 / CCUG 43141 / JCM 11478 / NBRC 16432 / NCIMB 13614 / HKI 0122).